The sequence spans 312 residues: DNA-directed RNA polymerase subunit alpha (312 aa).

Positions 1-226 are alpha N-terminal domain (alpha-NTD); it reads MIEFEKPNIT…EHFKVFMSTD (226 aa). Residues 243–312 are alpha C-terminal domain (alpha-CTD); sequence NEKKLEMTIE…ELGLSLRQDD (70 aa).

Belongs to the RNA polymerase alpha chain family. Homodimer. The RNAP catalytic core consists of 2 alpha, 1 beta, 1 beta' and 1 omega subunit. When a sigma factor is associated with the core the holoenzyme is formed, which can initiate transcription.

The enzyme catalyses RNA(n) + a ribonucleoside 5'-triphosphate = RNA(n+1) + diphosphate. DNA-dependent RNA polymerase catalyzes the transcription of DNA into RNA using the four ribonucleoside triphosphates as substrates. This is DNA-directed RNA polymerase subunit alpha from Lactobacillus gasseri (strain ATCC 33323 / DSM 20243 / BCRC 14619 / CIP 102991 / JCM 1131 / KCTC 3163 / NCIMB 11718 / NCTC 13722 / AM63).